A 504-amino-acid chain; its full sequence is MLGKDYMLAIILVNCDDDLWGDQNLEGETGLPPGWRKIRDAAGTYYWHVPSGSTQWQRPTWELAEDPGTGKEGIWELRPPKGRSFSSLDSSLNRSNSLTWYNEDSYVRSLEPGAKCFAVRSLGWVEVPEEDLAPGKSSIAVNNCIQQLAQARNRSQPHDGAWGEGQNMLMVLKKDAMSLLNPLDHSLIHCQPLVHIRVWGVGSSKGRDRDFAFVAGDKDSCMLKCHVFRCDVPAKAIASRLQGLCAQILSERVGLSGEAACCSPDPISPEDFPRQVELLDAVSQAAQKYEALYMGILPVTKAMGMDVLNEAIGTLTGRGDRKTWVPAMLSVSDSLMTAHPIQAEAGAEEEPLWQCPVRLVTFIGVGHDPHTFGLIADLGCQSFQCAAFWCQPHAGGLSEAVQAACMVQYQKCLVASAARGKAWGAQARARLRLKRTSSMDSPGGPLPPPLLKGGVGGAGAAPRKRGVFSFLDAFRLKPLFSICPKLILEGWGKRLYTLPVPRVL.

The region spanning 29 to 61 (TGLPPGWRKIRDAAGTYYWHVPSGSTQWQRPTW) is the WW domain. 2 consecutive PID domains span residues 111-278 (EPGA…QVEL) and 283-438 (SQAA…RTSS).

As to quaternary structure, interacts with APP (via intracellular domain). Interacts with APLP1 and APLP2 (via intracellular domain). Expressed predominantly in brain and testis.

It localises to the cytoplasm. The protein localises to the nucleus. Functionally, may modulate the internalization of amyloid-beta precursor protein. This is Amyloid-beta A4 precursor protein-binding family B member 3 from Rattus norvegicus (Rat).